The sequence spans 211 residues: Small ribosomal subunit protein uS3 (211 aa).

The 69-residue stretch at leucine 38–arginine 106 folds into the KH type-2 domain.

Belongs to the universal ribosomal protein uS3 family. In terms of assembly, part of the 30S ribosomal subunit. Forms a tight complex with proteins S10 and S14.

Functionally, binds the lower part of the 30S subunit head. Binds mRNA in the 70S ribosome, positioning it for translation. This chain is Small ribosomal subunit protein uS3, found in Citrifermentans bemidjiense (strain ATCC BAA-1014 / DSM 16622 / JCM 12645 / Bem) (Geobacter bemidjiensis).